Reading from the N-terminus, the 227-residue chain is Cytochrome c oxidase subunit 2 (227 aa).

Residues 1–14 (MALPFQLGFQDATS) lie on the Mitochondrial intermembrane side of the membrane. Residues 15–45 (PIMEELLHFHDHTLMIVFMISSLVLYLISSM) traverse the membrane as a helical segment. At 46-59 (LTTRLTHTSTMDAQ) the chain is on the mitochondrial matrix side. Residues 60–87 (EVETIWTILPAIILITIALPSLRILYMM) form a helical membrane-spanning segment. Topologically, residues 88–227 (DEINNPSMTI…CFEKWSTSML (140 aa)) are mitochondrial intermembrane. Positions 161, 196, 198, 200, 204, and 207 each coordinate Cu cation. A Mg(2+)-binding site is contributed by E198.

This sequence belongs to the cytochrome c oxidase subunit 2 family. As to quaternary structure, component of the cytochrome c oxidase (complex IV, CIV), a multisubunit enzyme composed of 14 subunits. The complex is composed of a catalytic core of 3 subunits MT-CO1, MT-CO2 and MT-CO3, encoded in the mitochondrial DNA, and 11 supernumerary subunits COX4I, COX5A, COX5B, COX6A, COX6B, COX6C, COX7A, COX7B, COX7C, COX8 and NDUFA4, which are encoded in the nuclear genome. The complex exists as a monomer or a dimer and forms supercomplexes (SCs) in the inner mitochondrial membrane with NADH-ubiquinone oxidoreductase (complex I, CI) and ubiquinol-cytochrome c oxidoreductase (cytochrome b-c1 complex, complex III, CIII), resulting in different assemblies (supercomplex SCI(1)III(2)IV(1) and megacomplex MCI(2)III(2)IV(2)). Found in a complex with TMEM177, COA6, COX18, COX20, SCO1 and SCO2. Interacts with TMEM177 in a COX20-dependent manner. Interacts with COX20. Interacts with COX16. Cu cation serves as cofactor.

The protein localises to the mitochondrion inner membrane. The catalysed reaction is 4 Fe(II)-[cytochrome c] + O2 + 8 H(+)(in) = 4 Fe(III)-[cytochrome c] + 2 H2O + 4 H(+)(out). Its function is as follows. Component of the cytochrome c oxidase, the last enzyme in the mitochondrial electron transport chain which drives oxidative phosphorylation. The respiratory chain contains 3 multisubunit complexes succinate dehydrogenase (complex II, CII), ubiquinol-cytochrome c oxidoreductase (cytochrome b-c1 complex, complex III, CIII) and cytochrome c oxidase (complex IV, CIV), that cooperate to transfer electrons derived from NADH and succinate to molecular oxygen, creating an electrochemical gradient over the inner membrane that drives transmembrane transport and the ATP synthase. Cytochrome c oxidase is the component of the respiratory chain that catalyzes the reduction of oxygen to water. Electrons originating from reduced cytochrome c in the intermembrane space (IMS) are transferred via the dinuclear copper A center (CU(A)) of subunit 2 and heme A of subunit 1 to the active site in subunit 1, a binuclear center (BNC) formed by heme A3 and copper B (CU(B)). The BNC reduces molecular oxygen to 2 water molecules using 4 electrons from cytochrome c in the IMS and 4 protons from the mitochondrial matrix. The polypeptide is Cytochrome c oxidase subunit 2 (MT-CO2) (Phyllostomus hastatus (Greater spear-nosed bat)).